Here is a 53-residue protein sequence, read N- to C-terminus: Toxin CjTL7 (53 aa).

A signal peptide spans 1–22 (MMIKVLLLLSSALVLFTPEAEG). A Tryptophan amide modification is found at tryptophan 51.

Contains 4 disulfide bonds.

The protein localises to the secreted. It localises to the nematocyst. Functionally, in vivo, only causes a weak change in behavior in shrimps (C.multidentata) (slight twitching of the walking legs), but no lethal effect is observed. No activity is observed when injected into fly larvae (M.domestica). The chain is Toxin CjTL7 from Epiactis japonica (Sea anemone).